Here is a 604-residue protein sequence, read N- to C-terminus: BTB/POZ domain-containing protein SR1IP1 (604 aa).

Positions 27–96 (SDVTVHVGEA…CYGINFDMST (70 aa)) constitute a BTB domain. The NPH3 domain occupies 201–474 (DWWAEDLTVL…VQVLYYEQQR (274 aa)). Phosphotyrosine is present on Y415. Disordered regions lie at residues 478-499 (EVTN…VLPP) and 532-604 (FEKE…HSIS). The stretch at 500–541 (KLSSYTDELSKLKRENQDLKLELLKMKMKLKEFEKESEKKTS) forms a coiled coil. Over residues 541–558 (SSSTISTNPSSPISTAST) the composition is skewed to low complexity. Over residues 591–604 (GRTKPPKDRRHSIS) the composition is skewed to basic residues.

It belongs to the NPH3 family. In terms of assembly, interacts with CAMTA3 and CUL3A.

It functions in the pathway protein modification; protein ubiquitination. In terms of biological role, acts as a substrate-specific adapter of an E3 ubiquitin-protein ligase complex (CUL3-RBX1-BTB) which mediates the ubiquitination and subsequent proteasomal degradation of target proteins. Involved in disease resistance. Acts as a substrate adapter that recruits CAMTA3/SR1 for ubiquitination and degradation during pathogen infection. Acts as a positive regulator of plant defense by removing the defense suppressor CAMTA3/SR1. In Arabidopsis thaliana (Mouse-ear cress), this protein is BTB/POZ domain-containing protein SR1IP1.